The primary structure comprises 120 residues: Large ribosomal subunit protein uL18 (120 aa).

Belongs to the universal ribosomal protein uL18 family. In terms of assembly, part of the 50S ribosomal subunit; part of the 5S rRNA/L5/L18/L25 subcomplex. Contacts the 5S and 23S rRNAs.

In terms of biological role, this is one of the proteins that bind and probably mediate the attachment of the 5S RNA into the large ribosomal subunit, where it forms part of the central protuberance. The protein is Large ribosomal subunit protein uL18 of Trichodesmium erythraeum (strain IMS101).